A 95-amino-acid chain; its full sequence is CRISPR-associated endoribonuclease Cas2 (95 aa).

Residue D10 participates in Mg(2+) binding.

The protein belongs to the CRISPR-associated endoribonuclease Cas2 protein family. Homodimer, forms a heterotetramer with a Cas1 homodimer. Requires Mg(2+) as cofactor.

CRISPR (clustered regularly interspaced short palindromic repeat), is an adaptive immune system that provides protection against mobile genetic elements (viruses, transposable elements and conjugative plasmids). CRISPR clusters contain sequences complementary to antecedent mobile elements and target invading nucleic acids. CRISPR clusters are transcribed and processed into CRISPR RNA (crRNA). Functions as a ssRNA-specific endoribonuclease. Involved in the integration of spacer DNA into the CRISPR cassette. The protein is CRISPR-associated endoribonuclease Cas2 of Geobacter sulfurreducens (strain ATCC 51573 / DSM 12127 / PCA).